An 88-amino-acid polypeptide reads, in one-letter code: Electron transfer flavoprotein regulatory factor 1 (88 aa).

Belongs to the complex I LYR family. Homotetramer. Interacts with NDUFAB1. Interacts with ETFA. Interacts with ETFB.

The protein localises to the mitochondrion. In terms of biological role, acts as a regulator of the electron transfer flavoprotein by promoting the removal of flavin from the ETF holoenzyme (composed of ETFA and ETFB). This is Electron transfer flavoprotein regulatory factor 1 from Bos taurus (Bovine).